The following is a 453-amino-acid chain: CBL-interacting protein kinase 24 (453 aa).

One can recognise a Protein kinase domain in the interval 18–271 (YEVGRTIGQG…IEQIREDTWF (254 aa)). Residues 24–32 (IGQGTFAKV) and K47 contribute to the ATP site. D141 acts as the Proton acceptor in catalysis. The activation loop stretch occupies residues 159–186 (DFGLSTLAQKGVGLLHTTCGTPNYVAPE). One can recognise an NAF domain in the interval 310 to 336 (NDGGPLVMNAFEMITLSQGLDLSALFD). Residues 343-372 (KRQTRFVSRKPAKTIVATIEVVAETMGLKV) form a PPI region.

Belongs to the protein kinase superfamily. CAMK Ser/Thr protein kinase family. SNF1 subfamily. In terms of assembly, interacts with CBL4. Requires Mn(2+) as cofactor.

The enzyme catalyses L-seryl-[protein] + ATP = O-phospho-L-seryl-[protein] + ADP + H(+). It carries out the reaction L-threonyl-[protein] + ATP = O-phospho-L-threonyl-[protein] + ADP + H(+). Involved in the regulatory pathway for the control of intracellular Na(+) and K(+) homeostasis and salt tolerance. Operates in synergy with CBL4 to activate the plasma membrane Na(+)/H(+) antiporter SOS1. CIPK serine-threonine protein kinases interact with CBL proteins. Binding of a CBL protein to the regulatory NAF domain of CIPK protein lead to the activation of the kinase in a calcium-dependent manner. The polypeptide is CBL-interacting protein kinase 24 (CIPK24) (Oryza sativa subsp. japonica (Rice)).